We begin with the raw amino-acid sequence, 1837 residues long: AF4/FMR2 family member lilli (1837 aa).

Disordered regions lie at residues 1–25 (MAQQ…QQQQ), 65–109 (NLYS…PRRL), 162–295 (IQQQ…LHNG), 455–592 (QQLP…KKKY), 605–712 (TGLL…PGNV), 797–852 (PKSQ…LQIP), 868–1250 (NNMQ…GGAK), 1267–1311 (QQQQ…GLAS), and 1344–1466 (APSS…DPML). Residues 16-25 (HQQQQQQQQQ) are compositionally biased toward low complexity. Over residues 84-109 (REKYERQQGIQSDDRETSLFSEPRRL) the composition is skewed to basic and acidic residues. Low complexity-rich tracts occupy residues 162-179 (IQQQ…VASS), 187-200 (QTQQ…QQQQ), and 247-264 (NSNS…SSSS). Residue threonine 468 is modified to Phosphothreonine. Residues 475-488 (LKIEKNPILEKQDS) show a composition bias toward basic and acidic residues. A compositionally biased stretch (acidic residues) spans 490-500 (LENDLELSESE). Phosphoserine is present on residues serine 497 and serine 499. Composition is skewed to low complexity over residues 509 to 529 (SPGS…SESS) and 542 to 552 (QQQQQTQQQQL). Residues 553 to 563 (HGHHPQSHHHQ) show a composition bias toward basic residues. The segment covering 564–583 (QFLQQQLQRQQQQQQQQQQL) has biased composition (low complexity). Composition is skewed to gly residues over residues 612-633 (GGLG…GNGG) and 641-673 (GSMG…GIGS). Polar residues-rich tracts occupy residues 678–690 (NKTP…NKWN) and 698–711 (PTSQ…SPGN). Residues 815–837 (SESATSGSSSSSCSSSDSAASAS) are compositionally biased toward low complexity. A compositionally biased stretch (polar residues) spans 868-880 (NNMQKSQSMSVTV). Residues 892–902 (PRQKKPRKKKM) show a composition bias toward basic residues. 2 positions are modified to phosphoserine: serine 913 and serine 914. Composition is skewed to low complexity over residues 927–951 (VVAQ…ATTT) and 961–1013 (QQQQ…SSVL). Residues 952 to 964 (KKGRGRPRKQQQQ) constitute a DNA-binding region (a.T hook). Phosphoserine occurs at positions 974 and 976. Residues 1021–1033 (SQSSSNGNTPTKK) are compositionally biased toward polar residues. Low complexity-rich tracts occupy residues 1034-1049 (MSSI…SAAA), 1056-1091 (AVAA…SSSS), 1130-1139 (GSSSPTSSSS), and 1157-1173 (ISNS…VNNN). Residues 1174–1184 (LQQQAMPQQSP) show a composition bias toward polar residues. Positions 1189-1212 (LSGGSQQLSSSDSSSSSSGSSSSS) are enriched in low complexity. A compositionally biased stretch (basic and acidic residues) spans 1217 to 1234 (DAKREKNRERKPKSDKNK). Positions 1267-1276 (QQQQQQQQVQ) are enriched in low complexity. Positions 1345–1355 (PSSSNQQNGHL) are enriched in polar residues. A compositionally biased stretch (basic residues) spans 1373–1386 (KVKHEHHQLHHHSQ). Basic and acidic residues-rich tracts occupy residues 1393 to 1407 (VKPE…ETKF) and 1416 to 1432 (FQLK…ERDQ). Serine 1517 carries the post-translational modification Phosphoserine. Polar residues predominate over residues 1550–1560 (AVQTTPPTSVT). Disordered regions lie at residues 1550 to 1571 (AVQT…LVSQ) and 1727 to 1756 (GNTP…IVPQ). Low complexity predominate over residues 1727–1747 (GNTPSSISPSNSVGSQGSGSN).

The protein belongs to the AF4 family.

Its subcellular location is the nucleus. Functionally, has a role in transcriptional regulation. Acts in parallel with the Ras/MAPK and the PI3K/PKB pathways in the control of cell identity and cellular growth. Essential for regulation of the cytoskeleton and cell growth but not for cell proliferation or growth rate. Required specifically for the microtubule-based basal transport of lipid droplets. Plays a partially redundant function downstream of Raf in cell fate specification in the developing eye. Pair-rule protein that regulates embryonic cellularization, gastrulation and segmentation. The polypeptide is AF4/FMR2 family member lilli (Drosophila willistoni (Fruit fly)).